The sequence spans 128 residues: Iron-sulfur cluster insertion protein ErpA (128 aa).

Residues Cys-56, Cys-120, and Cys-122 each contribute to the iron-sulfur cluster site.

Belongs to the HesB/IscA family. Homodimer. Iron-sulfur cluster is required as a cofactor.

Required for insertion of 4Fe-4S clusters for at least IspG. In Xanthomonas oryzae pv. oryzae (strain MAFF 311018), this protein is Iron-sulfur cluster insertion protein ErpA.